The primary structure comprises 128 residues: Protein 2B* (128 aa).

Disordered stretches follow at residues 1-27 and 92-128; these read PFMF…NPTA and RDDN…RNSS. Polar residues predominate over residues 18-27; that stretch reads SVINGSNPTA. Over residues 111–128 the composition is skewed to basic and acidic residues; the sequence is IDGRRDYKPDKSVRRNSS.

This sequence belongs to the encephalomyocarditis virus protein 2B* family.

The sequence is that of Protein 2B* from Aotus trivirgatus (Three-striped night monkey).